Reading from the N-terminus, the 291-residue chain is MELRSRRSAEAYLVTPEEPAKNKSERSIESNERVGTREAKSENTSVFSPAYSDTATTDSSKKVDDNEYYNFTSHFMPSLKNTRELENTILNLIQRIKEGDDETLVSEKDLILSVLNRSLASTSHWKLQAQLSELRATSEGRYAVETNLLKKEVEFLKNKTPKTNESASSAELRPLLERPLKRKLSLPGLAQRPLSTGARLEGGYGGVSPNSWKTKVPKLPLPASRPSLNLSPQKVPTGTDKVEEDTKIDTLELVENNKPHPRMRRRSDNPATNEYVRVFHLEKKEPKSRKK.

Disordered stretches follow at residues 1 to 62 (MELR…SSKK), 220 to 242 (PLPASRPSLNLSPQKVPTGTDKV), and 255 to 291 (ENNKPHPRMRRRSDNPATNEYVRVFHLEKKEPKSRKK). Positions 18-41 (EPAKNKSERSIESNERVGTREAKS) are enriched in basic and acidic residues. Polar residues-rich tracts occupy residues 42 to 58 (ENTSVFSPAYSDTATTD) and 226 to 236 (PSLNLSPQKVP). Residue serine 267 is modified to Phosphoserine.

It is found in the cytoplasm. The protein localises to the nucleus. This is an uncharacterized protein from Saccharomyces cerevisiae (strain ATCC 204508 / S288c) (Baker's yeast).